The primary structure comprises 691 residues: Elongation factor G (691 aa).

The tr-type G domain occupies aspartate 8–valine 283. Residues alanine 17–threonine 24, aspartate 81–histidine 85, and asparagine 135–aspartate 138 contribute to the GTP site.

The protein belongs to the TRAFAC class translation factor GTPase superfamily. Classic translation factor GTPase family. EF-G/EF-2 subfamily.

It is found in the cytoplasm. Its function is as follows. Catalyzes the GTP-dependent ribosomal translocation step during translation elongation. During this step, the ribosome changes from the pre-translocational (PRE) to the post-translocational (POST) state as the newly formed A-site-bound peptidyl-tRNA and P-site-bound deacylated tRNA move to the P and E sites, respectively. Catalyzes the coordinated movement of the two tRNA molecules, the mRNA and conformational changes in the ribosome. In Nitratidesulfovibrio vulgaris (strain ATCC 29579 / DSM 644 / CCUG 34227 / NCIMB 8303 / VKM B-1760 / Hildenborough) (Desulfovibrio vulgaris), this protein is Elongation factor G.